Reading from the N-terminus, the 93-residue chain is Putative regulatory protein LBL_1834 (93 aa).

This sequence belongs to the RemA family.

The polypeptide is Putative regulatory protein LBL_1834 (Leptospira borgpetersenii serovar Hardjo-bovis (strain L550)).